The chain runs to 86 residues: Large ribosomal subunit protein bL27 (86 aa).

The segment at 1-26 is disordered; sequence MATKKAGGSSRNGRDSAGRRLGVKKS.

Belongs to the bacterial ribosomal protein bL27 family.

This chain is Large ribosomal subunit protein bL27, found in Rickettsia akari (strain Hartford).